A 170-amino-acid chain; its full sequence is Adenine phosphoribosyltransferase (170 aa).

Belongs to the purine/pyrimidine phosphoribosyltransferase family. As to quaternary structure, homodimer.

It is found in the cytoplasm. It carries out the reaction AMP + diphosphate = 5-phospho-alpha-D-ribose 1-diphosphate + adenine. Its pathway is purine metabolism; AMP biosynthesis via salvage pathway; AMP from adenine: step 1/1. Catalyzes a salvage reaction resulting in the formation of AMP, that is energically less costly than de novo synthesis. In Acholeplasma laidlawii (strain PG-8A), this protein is Adenine phosphoribosyltransferase.